Consider the following 315-residue polypeptide: 4-diphosphocytidyl-2-C-methyl-D-erythritol kinase (315 aa).

The active site involves Lys-10. Residue 107–117 participates in ATP binding; it reads PVAGGMAGGSA. Asp-148 is a catalytic residue. A disordered region spans residues 292–315; sequence HPATSPVPGPAKNRGAHIVSIESE.

Belongs to the GHMP kinase family. IspE subfamily.

It catalyses the reaction 4-CDP-2-C-methyl-D-erythritol + ATP = 4-CDP-2-C-methyl-D-erythritol 2-phosphate + ADP + H(+). Its pathway is isoprenoid biosynthesis; isopentenyl diphosphate biosynthesis via DXP pathway; isopentenyl diphosphate from 1-deoxy-D-xylulose 5-phosphate: step 3/6. Functionally, catalyzes the phosphorylation of the position 2 hydroxy group of 4-diphosphocytidyl-2C-methyl-D-erythritol. This Corynebacterium efficiens (strain DSM 44549 / YS-314 / AJ 12310 / JCM 11189 / NBRC 100395) protein is 4-diphosphocytidyl-2-C-methyl-D-erythritol kinase.